The primary structure comprises 263 residues: Type III pantothenate kinase (263 aa).

ATP is bound at residue 14 to 21 (DIGNTSVN). 115-118 (GADR) is a substrate binding site. Asp-117 functions as the Proton acceptor in the catalytic mechanism. Residue Asp-137 coordinates K(+). An ATP-binding site is contributed by Thr-140. Thr-192 is a substrate binding site.

Belongs to the type III pantothenate kinase family. Homodimer. NH4(+) is required as a cofactor. K(+) serves as cofactor.

The protein localises to the cytoplasm. It catalyses the reaction (R)-pantothenate + ATP = (R)-4'-phosphopantothenate + ADP + H(+). It functions in the pathway cofactor biosynthesis; coenzyme A biosynthesis; CoA from (R)-pantothenate: step 1/5. Catalyzes the phosphorylation of pantothenate (Pan), the first step in CoA biosynthesis. The protein is Type III pantothenate kinase of Dehalococcoides mccartyi (strain CBDB1).